The sequence spans 145 residues: Probable D-aminoacyl-tRNA deacylase (145 aa).

This sequence belongs to the DTD family. As to quaternary structure, homodimer.

It is found in the cytoplasm. It carries out the reaction glycyl-tRNA(Ala) + H2O = tRNA(Ala) + glycine + H(+). It catalyses the reaction a D-aminoacyl-tRNA + H2O = a tRNA + a D-alpha-amino acid + H(+). Functionally, an aminoacyl-tRNA editing enzyme that deacylates mischarged D-aminoacyl-tRNAs. Also deacylates mischarged glycyl-tRNA(Ala), protecting cells against glycine mischarging by AlaRS. Acts via tRNA-based rather than protein-based catalysis; rejects L-amino acids rather than detecting D-amino acids in the active site. By recycling D-aminoacyl-tRNA to D-amino acids and free tRNA molecules, this enzyme counteracts the toxicity associated with the formation of D-aminoacyl-tRNA entities in vivo and helps enforce protein L-homochirality. This Shigella flexneri serotype 5b (strain 8401) protein is Probable D-aminoacyl-tRNA deacylase.